Consider the following 397-residue polypeptide: GDP-mannose transporter 1 (397 aa).

Positions 1–57 are disordered; the sequence is MSKPFVPTPNISRPATPSSLDYGKDEASSTLLRDMGERGDRERKDREERDKKEAMPS. At 1–61 the chain is on the cytoplasmic side; it reads MSKPFVPTPN…KEAMPSGQDQ (61 aa). Residues 9 to 19 show a composition bias toward polar residues; it reads PNISRPATPSS. Basic and acidic residues predominate over residues 34-54; it reads DMGERGDRERKDREERDKKEA. The chain crosses the membrane as a helical span at residues 62 to 82; sequence VLPILSYCAASIMMTVVNKYV. Topologically, residues 83 to 87 are lumenal; sequence VSGAN. Asn87 is a glycosylation site (N-linked (GlcNAc...) asparagine). The helical transmembrane segment at 88 to 108 threads the bilayer; that stretch reads FTMTFLLLAIQSSVCVLAVTT. Over 109–124 the chain is Cytoplasmic; sequence VKKLGFISFRDFDKND. Residues 125 to 142 traverse the membrane as a helical segment; sequence AKAWWPISTLLVAVIYTG. The Lumenal portion of the chain corresponds to 143 to 145; the sequence is SKA. A helical membrane pass occupies residues 146-168; the sequence is LQFLSIPVYTIFKNLTIILIAYG. Topologically, residues 169-174 are cytoplasmic; the sequence is EVFMFN. A helical membrane pass occupies residues 175 to 197; that stretch reads GAVSGLTLCSFALMVGSSIIAAW. Residues 198–228 lie on the Lumenal side of the membrane; it reads SDITSVWNKEPELDPITGLEITVGPVSTIGG. A helical transmembrane segment spans residues 229–249; it reads LNAGYIWMALNCFVSAAYVLF. Residues 250 to 272 lie on the Cytoplasmic side of the membrane; sequence MRKRIKVTGFKDWDSMYYNNLLS. A helical transmembrane segment spans residues 273 to 293; sequence IPILVVFSLVIEDWGSESLAL. The Lumenal segment spans residues 294–300; it reads NFPASNR. The helical transmembrane segment at 301–321 threads the bilayer; it reads VLLLSAMAFSGAAAVFISYST. The Cytoplasmic portion of the chain corresponds to 322–332; the sequence is AWCVRITGSTT. Residues 333–353 traverse the membrane as a helical segment; the sequence is YSMVGALNKLPVAASGILFFG. The Lumenal portion of the chain corresponds to 354 to 355; it reads DP. The chain crosses the membrane as a helical span at residues 356-376; sequence ANFGNISAIAVGGVAGVVYAV. At 377 to 397 the chain is on the cytoplasmic side; the sequence is AKTNQAKVEKARQARAAGGRP.

The protein belongs to the TPT transporter family. SLC35D subfamily. Homooligomer.

The protein localises to the golgi apparatus membrane. The protein resides in the cytoplasmic vesicle membrane. Its subcellular location is the endoplasmic reticulum membrane. In terms of biological role, involved in the import of GDP-mannose from the cytoplasm into the Golgi lumen. Involved in capsule synthesis. The sequence is that of GDP-mannose transporter 1 (GMT1) from Cryptococcus neoformans var. neoformans serotype D (strain B-3501A) (Filobasidiella neoformans).